The primary structure comprises 538 residues: Sterol esterase 2 (538 aa).

At M1–R11 the chain is on the cytoplasmic side. A helical; Signal-anchor for type II membrane protein transmembrane segment spans residues L12 to K32. Over N33–R538 the chain is Lumenal. Positions K42 to E87 are disordered. Positions K60–R70 are enriched in basic residues. Residues S73 and S107 each carry the phosphoserine modification. The Nucleophile role is filled by S287. Residues D480 and H511 each act as charge relay system in the active site.

The protein belongs to the AB hydrolase superfamily. Post-translationally, not glycosylated.

The protein localises to the cell membrane. It carries out the reaction a sterol ester + H2O = a sterol + a fatty acid + H(+). Its function is as follows. Mediates the hydrolysis of steryl esters. Required for mobilization of steryl ester, thereby playing a central role in lipid metabolism. The polypeptide is Sterol esterase 2 (YEH2) (Saccharomyces cerevisiae (strain ATCC 204508 / S288c) (Baker's yeast)).